Here is a 219-residue protein sequence, read N- to C-terminus: MALLLCLVGVTAALAHGCLHCHSKFSEKFSFYRHHVNLKSWWVGDIPVSGALLTDWSDDTMKELHLAIPAEITREKLDQVATAVYQRMDQLYQGKMYFPGYFPNELRNIFREQVHLIQNAIIESRLDCQRHCGIFQYETISCNNCTDSHVACFGYNCESSEQWESAVQGLLNYINNWHKQDVSMRATPAFLVSPAFRCLEPPHLANLTLEDAAECLKQH.

A signal peptide spans 1–15 (MALLLCLVGVTAALA). N206 carries N-linked (GlcNAc...) asparagine glycosylation.

This sequence belongs to the Izumo family.

The protein localises to the secreted. This is Izumo sperm-egg fusion protein 4 (IZUMO4) from Macaca fascicularis (Crab-eating macaque).